A 491-amino-acid polypeptide reads, in one-letter code: Glucose-6-phosphate 1-dehydrogenase (491 aa).

NADP(+)-binding positions include Arg-50, 92 to 93 (DV), and Lys-147. Substrate contacts are provided by His-177, Lys-181, Glu-215, and Asp-234. His-239 acts as the Proton acceptor in catalysis. Residues Lys-339 and Lys-344 each coordinate substrate.

This sequence belongs to the glucose-6-phosphate dehydrogenase family.

It carries out the reaction D-glucose 6-phosphate + NADP(+) = 6-phospho-D-glucono-1,5-lactone + NADPH + H(+). The protein operates within carbohydrate degradation; pentose phosphate pathway; D-ribulose 5-phosphate from D-glucose 6-phosphate (oxidative stage): step 1/3. Functionally, catalyzes the oxidation of glucose 6-phosphate to 6-phosphogluconolactone. The chain is Glucose-6-phosphate 1-dehydrogenase from Dickeya dadantii (strain 3937) (Erwinia chrysanthemi (strain 3937)).